The sequence spans 264 residues: Protein GrpE (264 aa).

Residues 36–49 are compositionally biased toward basic and acidic residues; it reads KVQSKKVSSDHSSS. A disordered region spans residues 36–59; sequence KVQSKKVSSDHSSSEDNASSDINS. Residues 50–59 show a composition bias toward low complexity; the sequence is EDNASSDINS.

Belongs to the GrpE family. As to quaternary structure, homodimer.

It is found in the cytoplasm. In terms of biological role, participates actively in the response to hyperosmotic and heat shock by preventing the aggregation of stress-denatured proteins, in association with DnaK and GrpE. It is the nucleotide exchange factor for DnaK and may function as a thermosensor. Unfolded proteins bind initially to DnaJ; upon interaction with the DnaJ-bound protein, DnaK hydrolyzes its bound ATP, resulting in the formation of a stable complex. GrpE releases ADP from DnaK; ATP binding to DnaK triggers the release of the substrate protein, thus completing the reaction cycle. Several rounds of ATP-dependent interactions between DnaJ, DnaK and GrpE are required for fully efficient folding. The polypeptide is Protein GrpE (Peanut witches'-broom phytoplasma).